The chain runs to 382 residues: Dual-specificity RNA methyltransferase RlmN (382 aa).

The Proton acceptor role is filled by Glu-91. The Radical SAM core domain occupies 97–339; that stretch reads ETDRGTLCIS…TTVRKTRGDD (243 aa). A disulfide bond links Cys-104 and Cys-344. 3 residues coordinate [4Fe-4S] cluster: Cys-111, Cys-115, and Cys-118. S-adenosyl-L-methionine is bound by residues 165-166, Ser-197, 219-221, and Asn-301; these read GE and SLH. Cys-344 serves as the catalytic S-methylcysteine intermediate.

It belongs to the radical SAM superfamily. RlmN family. The cofactor is [4Fe-4S] cluster.

Its subcellular location is the cytoplasm. It carries out the reaction adenosine(2503) in 23S rRNA + 2 reduced [2Fe-2S]-[ferredoxin] + 2 S-adenosyl-L-methionine = 2-methyladenosine(2503) in 23S rRNA + 5'-deoxyadenosine + L-methionine + 2 oxidized [2Fe-2S]-[ferredoxin] + S-adenosyl-L-homocysteine. The catalysed reaction is adenosine(37) in tRNA + 2 reduced [2Fe-2S]-[ferredoxin] + 2 S-adenosyl-L-methionine = 2-methyladenosine(37) in tRNA + 5'-deoxyadenosine + L-methionine + 2 oxidized [2Fe-2S]-[ferredoxin] + S-adenosyl-L-homocysteine. Specifically methylates position 2 of adenine 2503 in 23S rRNA and position 2 of adenine 37 in tRNAs. m2A2503 modification seems to play a crucial role in the proofreading step occurring at the peptidyl transferase center and thus would serve to optimize ribosomal fidelity. This chain is Dual-specificity RNA methyltransferase RlmN, found in Polaromonas naphthalenivorans (strain CJ2).